Here is a 630-residue protein sequence, read N- to C-terminus: Peptidyl-prolyl cis-trans isomerase cyp15 (630 aa).

The tract at residues M1–K46 is disordered. WD repeat units follow at residues M70 to V108, S113 to M152, Y157 to H198, M203 to D242, and R258 to D301. In terms of domain architecture, PPIase cyclophilin-type spans L475 to I629.

It belongs to the cyclophilin-type PPIase family.

It carries out the reaction [protein]-peptidylproline (omega=180) = [protein]-peptidylproline (omega=0). Its function is as follows. PPIases accelerate the folding of proteins. It catalyzes the cis-trans isomerization of proline imidic peptide bonds in oligopeptides. This is Peptidyl-prolyl cis-trans isomerase cyp15 (cyp15) from Rhizopus delemar (strain RA 99-880 / ATCC MYA-4621 / FGSC 9543 / NRRL 43880) (Mucormycosis agent).